The chain runs to 205 residues: Small ribosomal subunit protein uS4 (205 aa).

The region spanning Ser-94 to Val-157 is the S4 RNA-binding domain.

Belongs to the universal ribosomal protein uS4 family. As to quaternary structure, part of the 30S ribosomal subunit. Contacts protein S5. The interaction surface between S4 and S5 is involved in control of translational fidelity.

In terms of biological role, one of the primary rRNA binding proteins, it binds directly to 16S rRNA where it nucleates assembly of the body of the 30S subunit. Its function is as follows. With S5 and S12 plays an important role in translational accuracy. The protein is Small ribosomal subunit protein uS4 of Rickettsia conorii (strain ATCC VR-613 / Malish 7).